The primary structure comprises 638 residues: Chaperone protein DnaK (638 aa).

The residue at position 198 (Thr198) is a Phosphothreonine; by autocatalysis. A disordered region spans residues 599 to 638; it reads IYESQQAEGGAEGGPSGHHDDGIVDADYEEVKDDNTKKSA. Acidic residues predominate over residues 621–630; it reads IVDADYEEVK.

The protein belongs to the heat shock protein 70 family.

In terms of biological role, acts as a chaperone. This Allorhizobium ampelinum (strain ATCC BAA-846 / DSM 112012 / S4) (Agrobacterium vitis (strain S4)) protein is Chaperone protein DnaK.